Here is a 288-residue protein sequence, read N- to C-terminus: HTH-type transcriptional regulator YofA (288 aa).

Residues Met-1 to Thr-58 enclose the HTH lysR-type domain. The segment at residues Ile-18–Gln-37 is a DNA-binding region (H-T-H motif).

The protein belongs to the LysR transcriptional regulatory family.

It localises to the cytoplasm. Its function is as follows. Regulates expression of the cell division protein ftsW, and is essential for cell viability during stationary phase. The protein is HTH-type transcriptional regulator YofA (yofA) of Bacillus velezensis (strain DSM 23117 / BGSC 10A6 / LMG 26770 / FZB42) (Bacillus amyloliquefaciens subsp. plantarum).